A 490-amino-acid polypeptide reads, in one-letter code: Katanin p60 ATPase-containing subunit A-like 1 (490 aa).

An N-acetylmethionine modification is found at Met-1. Residues 95 to 178 (DPAVWPPPVP…MQDGASDGDI (84 aa)) form a disordered region. Residues 116–127 (PNREVRPLRKDV) show a composition bias toward basic and acidic residues. Residues 128–139 (AGVGARGPVGRA) show a composition bias toward low complexity. Positions 143-169 (SKSEKPSTNKDKDYRARGRDDKGRKNM) are enriched in basic and acidic residues. The residue at position 174 (Ser-174) is a Phosphoserine. Residue 248 to 255 (GPPGTGKT) coordinates ATP.

The protein belongs to the AAA ATPase family. Katanin p60 subunit A1 subfamily. A-like 1 sub-subfamily. Interacts with KATNB1 and KATNBL1.

It localises to the cytoplasm. Its subcellular location is the cytoskeleton. The protein resides in the spindle pole. The protein localises to the spindle. It catalyses the reaction n ATP + n H2O + a microtubule = n ADP + n phosphate + (n+1) alpha/beta tubulin heterodimers.. In terms of biological role, regulates microtubule dynamics in Sertoli cells, a process that is essential for spermiogenesis and male fertility. Severs microtubules in an ATP-dependent manner, promoting rapid reorganization of cellular microtubule arrays. Has microtubule-severing activity in vitro. This chain is Katanin p60 ATPase-containing subunit A-like 1, found in Sorex araneus (Eurasian common shrew).